Reading from the N-terminus, the 339-residue chain is tRNA N6-adenosine threonylcarbamoyltransferase (339 aa).

Positions 111 and 115 each coordinate Fe cation. Residues 134-138, aspartate 167, glycine 180, and asparagine 274 each bind substrate; that span reads LVSGG. A Fe cation-binding site is contributed by aspartate 302.

The protein belongs to the KAE1 / TsaD family. Requires Fe(2+) as cofactor.

It localises to the cytoplasm. It catalyses the reaction L-threonylcarbamoyladenylate + adenosine(37) in tRNA = N(6)-L-threonylcarbamoyladenosine(37) in tRNA + AMP + H(+). Its function is as follows. Required for the formation of a threonylcarbamoyl group on adenosine at position 37 (t(6)A37) in tRNAs that read codons beginning with adenine. Is involved in the transfer of the threonylcarbamoyl moiety of threonylcarbamoyl-AMP (TC-AMP) to the N6 group of A37, together with TsaE and TsaB. TsaD likely plays a direct catalytic role in this reaction. The chain is tRNA N6-adenosine threonylcarbamoyltransferase from Methylobacillus flagellatus (strain ATCC 51484 / DSM 6875 / VKM B-1610 / KT).